We begin with the raw amino-acid sequence, 704 residues long: Methionine--tRNA ligase (704 aa).

A 'HIGH' region motif is present at residues 17 to 27 (PYANGPIHLGH). Zn(2+) is bound by residues C148, C151, C161, and C164. Residues 348 to 352 (KMSKS) carry the 'KMSKS' region motif. Residue K351 participates in ATP binding. The tRNA-binding domain occupies 603 to 704 (ELSKVELRVG…KDAKPGDRLK (102 aa)).

It belongs to the class-I aminoacyl-tRNA synthetase family. MetG type 1 subfamily. As to quaternary structure, homodimer. The cofactor is Zn(2+).

The protein localises to the cytoplasm. The enzyme catalyses tRNA(Met) + L-methionine + ATP = L-methionyl-tRNA(Met) + AMP + diphosphate. Is required not only for elongation of protein synthesis but also for the initiation of all mRNA translation through initiator tRNA(fMet) aminoacylation. The sequence is that of Methionine--tRNA ligase from Leptospira borgpetersenii serovar Hardjo-bovis (strain L550).